Reading from the N-terminus, the 120-residue chain is Large ribosomal subunit protein bL17 (120 aa).

It belongs to the bacterial ribosomal protein bL17 family. In terms of assembly, part of the 50S ribosomal subunit. Contacts protein L32.

The polypeptide is Large ribosomal subunit protein bL17 (Geobacillus kaustophilus (strain HTA426)).